Here is an 821-residue protein sequence, read N- to C-terminus: Putative outer membrane usher protein YqiG (821 aa).

A signal peptide spans 1 to 20 (MSGNIGANPVIIIGCASAYA). A disulfide bridge links Cys-798 with Cys-817.

Belongs to the fimbrial export usher family.

It localises to the cell outer membrane. May be involved in H(2) production during fermentative growth. Involved in the export and assembly of a fimbrial subunit across the outer membrane. In Escherichia coli (strain K12), this protein is Putative outer membrane usher protein YqiG (yqiG).